A 257-amino-acid chain; its full sequence is Glutamate racemase (257 aa).

Residues 12 to 13 (DS) and 44 to 45 (YG) contribute to the substrate site. The Proton donor/acceptor role is filled by Cys75. 76 to 77 (NT) is a binding site for substrate. Cys185 serves as the catalytic Proton donor/acceptor. 186 to 187 (TH) is a substrate binding site.

It belongs to the aspartate/glutamate racemases family.

It catalyses the reaction L-glutamate = D-glutamate. It participates in cell wall biogenesis; peptidoglycan biosynthesis. Provides the (R)-glutamate required for cell wall biosynthesis. The polypeptide is Glutamate racemase (Clostridium botulinum (strain 657 / Type Ba4)).